A 460-amino-acid chain; its full sequence is Phosphoenolpyruvate carboxylase (460 aa).

The protein belongs to the PEPCase type 2 family. Homotetramer. The cofactor is Mg(2+).

The enzyme catalyses oxaloacetate + phosphate = phosphoenolpyruvate + hydrogencarbonate. Its function is as follows. Catalyzes the irreversible beta-carboxylation of phosphoenolpyruvate (PEP) to form oxaloacetate (OAA), a four-carbon dicarboxylic acid source for the tricarboxylic acid cycle. The polypeptide is Phosphoenolpyruvate carboxylase (Pyrobaculum aerophilum (strain ATCC 51768 / DSM 7523 / JCM 9630 / CIP 104966 / NBRC 100827 / IM2)).